A 695-amino-acid chain; its full sequence is Nucleoprotein (695 aa).

2 coiled-coil regions span residues 316 to 341 and 372 to 399; these read VNVG…RRHE and QTLA…VEDQ. Disordered regions lie at residues 423–458, 483–515, and 527–612; these read VQAR…SFVD, TSRE…TNPI, and PVQE…DTRA. 2 stretches are compositionally biased toward polar residues: residues 495 to 505 and 537 to 552; these read RQSQDLNNSQG and TTDS…SDNE. The PTAP/PSAP motif motif lies at 603 to 606; it reads PSAP.

This sequence belongs to the filoviruses nucleoprotein family. In terms of assembly, homooligomer. Homomultimerizes to form the nucleocapsid. Binds to viral genomic RNA. Interacts with VP35 and VP30 to form the nucleocapsid. Also interacts with VP24 and VP40. Post-translationally, phosphorylated.

Its subcellular location is the virion. The protein resides in the host cytoplasm. In terms of biological role, encapsidates the genome, protecting it from nucleases. The encapsidated genomic RNA is termed the nucleocapsid and serves as template for transcription and replication. During replication, encapsidation by NP is coupled to RNA synthesis and all replicative products are resistant to nucleases. The protein is Nucleoprotein (NP) of Chlorocebus aethiops (Green monkey).